A 580-amino-acid polypeptide reads, in one-letter code: Cytochrome c oxidase subunit 1 (580 aa).

The disordered stretch occupies residues 1–25 (MTAVAPRVDGHVAPQRPEPTGHARK). A helical transmembrane segment spans residues 43 to 63 (IMYIIMSFSFFFLGGLMALLI). Histidine 87 lines the Fe(II)-heme a pocket. Helical transmembrane passes span 90–110 (VMLL…VLPL), 122–142 (LNAF…AGFL), 171–191 (MWII…INML), 214–234 (IFVT…AALG), 259–279 (LFWF…FGII), and 292–312 (FGYI…MAVW). Cu cation is bound by residues histidine 265 and tyrosine 269. Residues 265–269 (HPEVY) constitute a cross-link (1'-histidyl-3'-tyrosine (His-Tyr)). Residues histidine 314 and histidine 315 each coordinate Cu cation. Helical transmembrane passes span 316–336 (MFVT…LISV) and 360–380 (MIWA…GIML). Histidine 398 provides a ligand contact to heme a3. 3 consecutive transmembrane segments (helical) span residues 399 to 419 (FHYT…YFWF), 434 to 454 (IHFW…HWLG), and 477 to 497 (ISTI…WNVF). Residue histidine 400 coordinates Fe(II)-heme a.

The protein belongs to the heme-copper respiratory oxidase family. In terms of assembly, associates with subunits II, III and IV to form cytochrome c oxidase. Requires Cu(2+) as cofactor. The cofactor is heme.

It is found in the cell membrane. It carries out the reaction 4 Fe(II)-[cytochrome c] + O2 + 8 H(+)(in) = 4 Fe(III)-[cytochrome c] + 2 H2O + 4 H(+)(out). It participates in energy metabolism; oxidative phosphorylation. Cytochrome c oxidase is the component of the respiratory chain that catalyzes the reduction of oxygen to water. Subunits 1-3 form the functional core of the enzyme complex. CO I is the catalytic subunit of the enzyme. Electrons originating in cytochrome c are transferred via the copper A center of subunit 2 and heme A of subunit 1 to the bimetallic center formed by heme A3 and copper B. This is Cytochrome c oxidase subunit 1 (ctaD) from Corynebacterium efficiens (strain DSM 44549 / YS-314 / AJ 12310 / JCM 11189 / NBRC 100395).